The sequence spans 135 residues: C-type lectin PAL (135 aa).

4 disulfides stabilise this stretch: C3-C14, C31-C131, C38-C133, and C106-C123. The 123-residue stretch at 10–132 (MNGLCYKIFD…CGSKNAFLCQ (123 aa)) folds into the C-type lectin domain. Ca(2+) is bound by residues Q96, D98, E104, N119, and D120. The Galactose-binding motif lies at 96–98 (QPD).

It belongs to the true venom lectin family. Homodimer; disulfide-linked. Expressed by the venom gland.

The protein localises to the secreted. Functionally, galactose-binding lectin which recognizes specific carbohydrate structures and agglutinates a variety of animal cells by binding to cell-surface glycoproteins and glycolipids. This is a calcium-dependent lectin. Shows high hemagglutinating activity (MHC is 0.25 ug/ml on rabbit erythrocytes). This Bitis arietans (African puff adder) protein is C-type lectin PAL.